The chain runs to 294 residues: Single-stranded nucleic acid-binding protein (294 aa).

The segment at 1–30 (MSAEIEEATNAVNNLSINDSEQQPRAPTHK) is disordered. S2 carries the N-acetylserine modification. A phosphoserine mark is found at S2 and S16. Positions 10-25 (NAVNNLSINDSEQQPR) are enriched in polar residues. An RRM 1 domain is found at 37-119 (DTIFIGNVAH…REIHIKRART (83 aa)). T49 carries the post-translational modification Phosphothreonine. S66 is subject to Phosphoserine. Residues T91 and T119 each carry the phosphothreonine modification. Omega-N-methylarginine is present on R125. Positions 131-151 (RGGFRGRGGFRGGFRGGYRGG) are RNA-binding RGG-box. 3 positions are modified to dimethylated arginine: R135, R137, and R141. R145 is modified (dimethylated arginine; alternate). R145 carries the omega-N-methylarginine; alternate modification. R149 is modified (omega-N-methylarginine). Residues 151–169 (GFRGRGNFRGRGGARGGFN) show a composition bias toward gly residues. The tract at residues 151 to 171 (GFRGRGNFRGRGGARGGFNGQ) is disordered. 3 positions are modified to dimethylated arginine: R153, R155, and R159. R161 and R165 each carry dimethylated arginine; alternate. Residues R161 and R165 each carry the omega-N-methylarginine; alternate modification. An RRM 2 domain is found at 186–274 (DTLYINNVPF…RELTVDVAVI (89 aa)). Position 242 is a phosphothreonine (T242). At S244 the chain carries Phosphoserine. Residues 275 to 294 (RPENDEEEIEQETGSEEKQE) are disordered. Acidic residues predominate over residues 278–288 (NDEEEIEQETG). The residue at position 287 (T287) is a Phosphothreonine. Phosphoserine is present on S289.

The protein belongs to the RRM GAR family. Associated with snR10 and snR11 small nuclear RNAs.

The protein localises to the cytoplasm. The protein resides in the nucleus. Its subcellular location is the nucleolus. It localises to the P-body. It is found in the stress granule. Functions in the transition of mRNAs from translation to an mRNP complex destined for decapping. High-copy-number suppressor of decapping defects. Overexpression suppresses decapping defects in both DCP1-2 and DCP2-7 mutations. Acts to promote translational repression of mRNA in conjunction with DHH1 and subsequent mRNA localization to P bodies. Promotes translational repression of mRNA during glucose deprivation. The protein is Single-stranded nucleic acid-binding protein (SBP1) of Saccharomyces cerevisiae (strain ATCC 204508 / S288c) (Baker's yeast).